A 415-amino-acid polypeptide reads, in one-letter code: uncharacterized protein (415 aa).

2 disordered regions span residues 329–351 (KFNK…TESS) and 388–415 (KSMM…IITL). Acidic residues predominate over residues 338–348 (LQNESGDDSET). Basic residues predominate over residues 399 to 409 (KSNRKSNKRSN).

This is an uncharacterized protein from Acanthamoeba polyphaga mimivirus (APMV).